Reading from the N-terminus, the 261-residue chain is Ribosomal RNA small subunit methyltransferase A (261 aa).

Positions 11, 13, 38, 59, 84, and 106 each coordinate S-adenosyl-L-methionine.

The protein belongs to the class I-like SAM-binding methyltransferase superfamily. rRNA adenine N(6)-methyltransferase family. RsmA subfamily.

Its subcellular location is the cytoplasm. The enzyme catalyses adenosine(1518)/adenosine(1519) in 16S rRNA + 4 S-adenosyl-L-methionine = N(6)-dimethyladenosine(1518)/N(6)-dimethyladenosine(1519) in 16S rRNA + 4 S-adenosyl-L-homocysteine + 4 H(+). Its function is as follows. Specifically dimethylates two adjacent adenosines (A1518 and A1519) in the loop of a conserved hairpin near the 3'-end of 16S rRNA in the 30S particle. May play a critical role in biogenesis of 30S subunits. In Wigglesworthia glossinidia brevipalpis, this protein is Ribosomal RNA small subunit methyltransferase A.